The chain runs to 648 residues: Replication restart protein PriA (648 aa).

One can recognise a Helicase ATP-binding domain in the interval 131–297 (TILNESNKPT…EIGKYQLVTL (167 aa)). 144–151 (GVTGSGKT) provides a ligand contact to ATP. The DEAH box signature appears at 240–243 (DEEH). Zn(2+) contacts are provided by Cys358, Cys361, Cys367, Cys370, Cys385, Cys388, Cys398, and Cys401. The 156-residue stretch at 393-548 (KIFSSCPECL…SFFANELEIR (156 aa)) folds into the Helicase C-terminal domain.

The protein belongs to the helicase family. PriA subfamily. In terms of assembly, component of the replication restart primosome. Requires Zn(2+) as cofactor.

The catalysed reaction is Couples ATP hydrolysis with the unwinding of duplex DNA by translocating in the 3'-5' direction.. The enzyme catalyses ATP + H2O = ADP + phosphate + H(+). Functionally, initiates the restart of stalled replication forks, which reloads the replicative helicase on sites other than the origin of replication. Recognizes and binds to abandoned replication forks and remodels them to uncover a helicase loading site. Promotes assembly of the primosome at these replication forks. The polypeptide is Replication restart protein PriA (Rickettsia conorii (strain ATCC VR-613 / Malish 7)).